The chain runs to 291 residues: MEMO1 family protein PYRAB05390 (291 aa).

This sequence belongs to the MEMO1 family.

The chain is MEMO1 family protein PYRAB05390 from Pyrococcus abyssi (strain GE5 / Orsay).